The chain runs to 662 residues: MTVSHNHSTKISQQPISSVSAFKFFGKKLLSSSHGNKLKKKASLPPDFHSTSTNDSESSSPKLPNSLKTSRRANSFAHTTNSKRSLSSASTKILPPAGSSTSISRGNRHSSTSRNLSNSKFSSERLVYNPYGVSTPSTSLSSVSTSMKKDPDLGFYLHDGDSKIRMLPIPIVDPNEYLPDEMKEASIQLSDNFVFDDENKTIGWGGSCEVRKIRSKYRKKDVFALKKLNMIYNETPEKFYKRCSKEFIIAKQLSHHVHITNTFLLVKVPTTVYTTRGWGFVMELGLRDLFAMIQKSGWRSVALAEKFCIFKQVACGVKFCHDQGIAHRDLKPENVLLSPDGVCKLTDFGISDWYHTDPHDLSSPVKKCAGMIGSPPYAPPEVMFYDSKKHYDTELQQPYDPRALDCYGLGIILMTLVNNVIPFLESCSFDTGFRDYCDAYENFIRLHDRAFRNRGNYRPGPGMEYHLARNFKNGHASRVAWRLADPEAATRYTIDDLFEDPWFQGIETCVDANDKYVCKKPIIKTTTYENPRGFHIATDVAATTPTSNPFLKNRVPIRSMVDIAAHPSPTATVLASSPPPPPPATHVPAEALFTLRETPPPQLATLTLSEEPPATPAPSAPSAPSARVRGHSPHRVVHHHLNIVNSLVHSSSAASSQVPAST.

Residues 35 to 119 are disordered; that stretch reads GNKLKKKASL…SSTSRNLSNS (85 aa). The segment covering 50–60 has biased composition (low complexity); sequence STSTNDSESSS. Polar residues-rich tracts occupy residues 61-91 and 98-119; these read PKLP…SAST and GSST…LSNS. The region spanning 196 to 503 is the Protein kinase domain; that stretch reads DDENKTIGWG…IDDLFEDPWF (308 aa). ATP-binding positions include 202–210 and K226; that span reads IGWGGSCEV. The Proton acceptor role is filled by D329. Residues 605 to 631 are disordered; that stretch reads TLTLSEEPPATPAPSAPSAPSARVRGH.

Belongs to the protein kinase superfamily. Ser/Thr protein kinase family.

It catalyses the reaction L-seryl-[protein] + ATP = O-phospho-L-seryl-[protein] + ADP + H(+). The catalysed reaction is L-threonyl-[protein] + ATP = O-phospho-L-threonyl-[protein] + ADP + H(+). Essential determinant for low-affinity spermidine transport. This chain is Serine/threonine-protein kinase PTK1/STK1 (PTK1), found in Saccharomyces cerevisiae (strain ATCC 204508 / S288c) (Baker's yeast).